Reading from the N-terminus, the 382-residue chain is Elloramycin glycosyltransferase ElmGT (382 aa).

Belongs to the glycosyltransferase 28 family.

The enzyme catalyses 8-demethyltetracenomycin C + dTDP-beta-L-rhamnose = 8-demethyl-8-alpha-L-rhamnosyl-tetracenomycin C + dTDP + H(+). The protein operates within antibiotic biosynthesis. In terms of biological role, glycosyltransferase that transfers an L-rhamnose moiety from dTDP-L-rhamnose to the elloramycin aglycone 8-demethyl-tetracenomycin C (8DMTC) in elloramycin biosynthesis, an antitumor polyketide. Possesses donor substrate flexibility: able to transfer at least 11 different sugars to 8DMTC, such as NDP-D-glucose, as well as NDP-L-digitoxose, including both L- and D-isomeric forms of some sugars. This chain is Elloramycin glycosyltransferase ElmGT, found in Streptomyces olivaceus.